The sequence spans 317 residues: Probable deoxyhypusine synthase 1 (317 aa).

Catalysis depends on Lys285, which acts as the Nucleophile.

Belongs to the deoxyhypusine synthase family. NAD(+) is required as a cofactor.

It carries out the reaction [eIF5A protein]-L-lysine + spermidine = [eIF5A protein]-deoxyhypusine + propane-1,3-diamine. It functions in the pathway protein modification; eIF5A hypusination. Catalyzes the NAD-dependent oxidative cleavage of spermidine and the subsequent transfer of the butylamine moiety of spermidine to the epsilon-amino group of a specific lysine residue of the eIF-5A precursor protein to form the intermediate deoxyhypusine residue. This Methanosarcina acetivorans (strain ATCC 35395 / DSM 2834 / JCM 12185 / C2A) protein is Probable deoxyhypusine synthase 1 (dys1).